The chain runs to 121 residues: MTELLGSYVPIAIFIGIALVIGLALLVAPFAVAFKAPDSEKLSAYECGFNAFDDARMKFDVRFYLVSILFIIFDLEVAFLFPWAVSFKEMGWFGFWSMMVFLLVLTVGFIYEWKKGALEWN.

3 helical membrane-spanning segments follow: residues 11 to 31 (IAIFIGIALVIGLALLVAPFA), 65 to 85 (LVSILFIIFDLEVAFLFPWAV), and 90 to 110 (MGWFGFWSMMVFLLVLTVGFI).

This sequence belongs to the complex I subunit 3 family. NDH-1 is composed of 14 different subunits. Subunits NuoA, H, J, K, L, M, N constitute the membrane sector of the complex.

The protein localises to the cell inner membrane. The enzyme catalyses a quinone + NADH + 5 H(+)(in) = a quinol + NAD(+) + 4 H(+)(out). Its function is as follows. NDH-1 shuttles electrons from NADH, via FMN and iron-sulfur (Fe-S) centers, to quinones in the respiratory chain. The immediate electron acceptor for the enzyme in this species is believed to be ubiquinone. Couples the redox reaction to proton translocation (for every two electrons transferred, four hydrogen ions are translocated across the cytoplasmic membrane), and thus conserves the redox energy in a proton gradient. This is NADH-quinone oxidoreductase subunit A 1 from Rhizobium meliloti (strain 1021) (Ensifer meliloti).